A 428-amino-acid chain; its full sequence is Large envelope protein (428 aa).

Gly-2 carries N-myristoyl glycine; by host lipidation. A pre-S1 region spans residues 2 to 145; sequence GNNIKVTFDP…PPLRDTHPHL (144 aa). Positions 2–204 are pre-S; sequence GNNIKVTFDP…PLTIGDPVLS (203 aa). Residues 2-211 lie on the Virion surface; in external conformation side of the membrane; the sequence is GNNIKVTFDP…VLSTEMSPSG (210 aa). The Intravirion; in internal conformation segment spans residues 2–283; sequence GNNIKVTFDP…NGFRWMYLRR (282 aa). Asn-3 carries an N-linked (GlcNAc...) asparagine glycan. A disordered region spans residues 110-144; that stretch reads RDIPRGIVPPQTPSNRDQRRKPTPLTPPLRDTHPH. The interval 146-204 is pre-S2; sequence TMKNQTGHLQGFAEGLRALTTSDHHNSAYGDPFTTLSPVVPTVSTTLSPPLTIGDPVLS. The chain crosses the membrane as a helical span at residues 212-232; it reads LLGLLAGLQVVYFLWTKILTI. Topologically, residues 233–283 are intravirion; in external conformation; it reads AQSLDWWWTSLSFPGGIPECTGQNLQFQTCKHLPTSCPPTCNGFRWMYLRR. A helical membrane pass occupies residues 284-304; it reads FIIYLLVLLLFLTFLLVLLDW. Over 305-376 the chain is Virion surface; it reads KGLLPVCPMM…WALARFSWLS (72 aa). N-linked (GlcNAc...) asparagine; by host glycosylation occurs at Asn-348. Residues 377–397 form a helical membrane-spanning segment; it reads LLVPLLQWLGGISLTVWLLLI. Over 398 to 403 the chain is Intravirion; that stretch reads WMIWFW. A helical membrane pass occupies residues 404–426; that stretch reads GPVLMSILPPFIPIFALFFLIWA. Residues 427–428 lie on the Virion surface side of the membrane; sequence YI.

It belongs to the orthohepadnavirus major surface antigen family. In terms of assembly, in its internal form (Li-HBsAg), interacts with the capsid protein and with the isoform S. Interacts with host chaperone CANX. Associates with host chaperone CANX through its pre-S2 N glycan; this association may be essential for isoform M proper secretion. As to quaternary structure, interacts with isoform L. Interacts with the antigens of satellite virus HDV (HDVAgs); this interaction is required for encapsidation of HDV genomic RNA. In terms of processing, isoform M is N-terminally acetylated by host at a ratio of 90%, and N-glycosylated by host at the pre-S2 region. Post-translationally, myristoylated.

It is found in the virion membrane. In terms of biological role, the large envelope protein exists in two topological conformations, one which is termed 'external' or Le-HBsAg and the other 'internal' or Li-HBsAg. In its external conformation the protein attaches the virus to cell receptors and thereby initiating infection. This interaction determines the species specificity and liver tropism. This attachment induces virion internalization predominantly through caveolin-mediated endocytosis. The large envelope protein also assures fusion between virion membrane and endosomal membrane. In its internal conformation the protein plays a role in virion morphogenesis and mediates the contact with the nucleocapsid like a matrix protein. The middle envelope protein plays an important role in the budding of the virion. It is involved in the induction of budding in a nucleocapsid independent way. In this process the majority of envelope proteins bud to form subviral lipoprotein particles of 22 nm of diameter that do not contain a nucleocapsid. The chain is Large envelope protein from Ground squirrel hepatitis virus (strain 27) (GSHV).